The chain runs to 686 residues: U3 small nucleolar RNA-associated protein 4 homolog (686 aa).

WD repeat units lie at residues 7 to 50 (HRVR…ANYF), 51 to 92 (QEKF…QALN), 93 to 135 (IKYA…PDKI), 136 to 181 (QFER…AVHK), 182 to 226 (MIVD…SATG), 227 to 275 (TLVK…SSEK), 276 to 317 (QWVR…LMEK), 318 to 377 (VEVK…PLSK), 378 to 427 (NADH…NISL), 428 to 475 (KRVS…KHLH), 476 to 516 (AFQP…VKQL), 517 to 566 (KLHC…WSRT), 567 to 627 (VQKQ…FPPT), and 628 to 666 (NESDVIRRRTAHAFKISKIYKPLLFMDLLDERTLVAVER). Residue Lys321 forms a Glycyl lysine isopeptide (Lys-Gly) (interchain with G-Cter in SUMO2) linkage.

In terms of assembly, interacts with HIVEP1 Interacts with NOL11. Part of the small subunit (SSU) processome, composed of more than 70 proteins and the RNA chaperone small nucleolar RNA (snoRNA) U3. May be a component of the proposed t-UTP subcomplex of the ribosomal small subunit (SSU) processome containing at least UTP4, WDR43, HEATR1, UTP15, WDR75. In terms of processing, may be phosphorylated during mitosis; may control the association of this protein with WRD43 and UTP15.

It is found in the nucleus. It localises to the nucleolus. The protein resides in the chromosome. Ribosome biogenesis factor. Involved in nucleolar processing of pre-18S ribosomal RNA. Part of the small subunit (SSU) processome, first precursor of the small eukaryotic ribosomal subunit. During the assembly of the SSU processome in the nucleolus, many ribosome biogenesis factors, an RNA chaperone and ribosomal proteins associate with the nascent pre-rRNA and work in concert to generate RNA folding, modifications, rearrangements and cleavage as well as targeted d Involved in SSU pre-rRNA processing at sites A', A0, 1 and 2b. Required for optimal pre-ribosomal RNA transcription by RNA polymerase. May be a transcriptional regulator. Its function is as follows. (Microbial infection) Acts as a positive regulator of HIVEP1 which specifically binds to the DNA sequence 5'-GGGACTTTCC-3' found in enhancer elements of numerous viral promoters such as those of HIV-1, SV40, or CMV. The chain is U3 small nucleolar RNA-associated protein 4 homolog from Homo sapiens (Human).